A 308-amino-acid chain; its full sequence is MKQIHVIDSHTGGEPTRLVMKGFPQLHGRSMAEQRDELRELHDRWRRACLLEPRGNDVLVGALYCPPVSADATCGVIFFNNAGYLNMCGHGTIGLVASLQHLGLIAPGVHKIDTPVGQVSATLHEDGAITVANVPSYRYRQHVAVNVPGHGVVHGDIAWGGNWFFLVAEHGQRIELDNREVLTEYTWAMLKALEAQGITGENGAPIDHVELFADDPNADSRNFVMCPGKAYDRSPCGTGTSAKLACLAADGTLAEGQTWVQASITGSQFHGRYERDGERIRPFITGRAHMTADSTLLIDEQDPFAWGI.

Catalysis depends on Cys88, which acts as the Proton acceptor. Substrate is bound by residues 89–90 (GH), His208, and Asp232. Cys236 serves as the catalytic Proton donor. 237 to 238 (GT) is a binding site for substrate.

The protein belongs to the proline racemase family.

It carries out the reaction trans-4-hydroxy-L-proline = cis-4-hydroxy-D-proline. Its function is as follows. Catalyzes the epimerization of trans-4-hydroxy-L-proline (t4LHyp) to cis-4-hydroxy-D-proline (c4DHyp). Is likely involved in a degradation pathway that converts t4LHyp to alpha-ketoglutarate. Can also catalyze the epimerization of trans-3-hydroxy-L-proline (t3LHyp) to cis-3-hydroxy-D-proline (c3DHyp), albeit with 200-fold lower efficiency. This Pseudomonas putida (strain ATCC 700007 / DSM 6899 / JCM 31910 / BCRC 17059 / LMG 24140 / F1) protein is 4-hydroxyproline 2-epimerase.